Reading from the N-terminus, the 310-residue chain is Ribosomal RNA small subunit methyltransferase H (310 aa).

Residues 35-37 (GGH), D52, F79, D100, and Q107 each bind S-adenosyl-L-methionine.

It belongs to the methyltransferase superfamily. RsmH family.

The protein resides in the cytoplasm. The catalysed reaction is cytidine(1402) in 16S rRNA + S-adenosyl-L-methionine = N(4)-methylcytidine(1402) in 16S rRNA + S-adenosyl-L-homocysteine + H(+). In terms of biological role, specifically methylates the N4 position of cytidine in position 1402 (C1402) of 16S rRNA. The polypeptide is Ribosomal RNA small subunit methyltransferase H (Anaeromyxobacter sp. (strain K)).